The sequence spans 342 residues: Holliday junction branch migration complex subunit RuvB (342 aa).

The tract at residues 1-185 is large ATPase domain (RuvB-L); sequence MTVKPLRDVT…FPIQERLEYY (185 aa). ATP contacts are provided by residues L24, R25, G66, K69, T70, S71, 132 to 134, R175, Y185, and R222; that span reads EDY. T70 is a Mg(2+) binding site. The interval 186-256 is small ATPAse domain (RuvB-S); it reads GPAELKEIAV…VVDRTLRRLE (71 aa). The interval 259-342 is head domain (RuvB-H); it reads ARGLDAMDRR…RSGGKQGSLV (84 aa). 2 residues coordinate DNA: R314 and R319.

Belongs to the RuvB family. Homohexamer. Forms an RuvA(8)-RuvB(12)-Holliday junction (HJ) complex. HJ DNA is sandwiched between 2 RuvA tetramers; dsDNA enters through RuvA and exits via RuvB. An RuvB hexamer assembles on each DNA strand where it exits the tetramer. Each RuvB hexamer is contacted by two RuvA subunits (via domain III) on 2 adjacent RuvB subunits; this complex drives branch migration. In the full resolvosome a probable DNA-RuvA(4)-RuvB(12)-RuvC(2) complex forms which resolves the HJ.

Its subcellular location is the cytoplasm. It catalyses the reaction ATP + H2O = ADP + phosphate + H(+). The RuvA-RuvB-RuvC complex processes Holliday junction (HJ) DNA during genetic recombination and DNA repair, while the RuvA-RuvB complex plays an important role in the rescue of blocked DNA replication forks via replication fork reversal (RFR). RuvA specifically binds to HJ cruciform DNA, conferring on it an open structure. The RuvB hexamer acts as an ATP-dependent pump, pulling dsDNA into and through the RuvAB complex. RuvB forms 2 homohexamers on either side of HJ DNA bound by 1 or 2 RuvA tetramers; 4 subunits per hexamer contact DNA at a time. Coordinated motions by a converter formed by DNA-disengaged RuvB subunits stimulates ATP hydrolysis and nucleotide exchange. Immobilization of the converter enables RuvB to convert the ATP-contained energy into a lever motion, pulling 2 nucleotides of DNA out of the RuvA tetramer per ATP hydrolyzed, thus driving DNA branch migration. The RuvB motors rotate together with the DNA substrate, which together with the progressing nucleotide cycle form the mechanistic basis for DNA recombination by continuous HJ branch migration. Branch migration allows RuvC to scan DNA until it finds its consensus sequence, where it cleaves and resolves cruciform DNA. The polypeptide is Holliday junction branch migration complex subunit RuvB (Anaeromyxobacter dehalogenans (strain 2CP-C)).